We begin with the raw amino-acid sequence, 194 residues long: dCTP deaminase (194 aa).

DCTP-binding positions include 110–115 (RSSLAR), D128, 136–138 (VLE), Y171, K178, and Q182. E138 acts as the Proton donor/acceptor in catalysis. A disordered region spans residues 174-194 (RKSSKYKDQQEAVASRISQDK).

This sequence belongs to the dCTP deaminase family. In terms of assembly, homotrimer.

The catalysed reaction is dCTP + H2O + H(+) = dUTP + NH4(+). The protein operates within pyrimidine metabolism; dUMP biosynthesis; dUMP from dCTP (dUTP route): step 1/2. Catalyzes the deamination of dCTP to dUTP. The chain is dCTP deaminase from Shewanella frigidimarina (strain NCIMB 400).